A 506-amino-acid chain; its full sequence is Acrylate reductase flavoprotein subunit (506 aa).

The tat-type signal signal peptide spans M1–A30. Residues A54, E74, N82, G87, and G88 each coordinate FAD. Catalysis depends on R333, which acts as the Proton donor. The FAD site is built by E473 and I489.

This sequence belongs to the FAD-dependent oxidoreductase 2 family. FRD/SDH subfamily. In terms of assembly, the ArdAB flavocytochrome c is composed of a FAD-containing subunit (ArdA) and a heme c-containing subunit (ArdB). The cofactor is FAD. Post-translationally, predicted to be exported by the Tat system. The position of the signal peptide cleavage has not been experimentally proven.

The protein resides in the periplasm. With respect to regulation, methacrylate acts as a competitive inhibitor of the acrylate reductase activity and suppresses the reductase activity in dose-dependent manner. In terms of biological role, FAD-containing subunit of the ArdAB flavocytochrome c, which catalyzes the reduction of acrylate to propanoate and supports dimethylsulfoniopropionate-dependent anaerobic respiration. In vitro, can use the artificial electron donor methyl viologen. The natural electron donor is probably a low-potential cytochrome c. Also shows weak activity toward methacrylate in vitro (at a 22-fold lower rate) but cannot use other tested 2-enoates, including crotonic, fumaric, sorbic, urocanic, cinnamic, p-coumaric, caffeic or ferulic acids. The protein catalyzes a unidirectional reaction and cannot oxidize propanoate with phenazine metasulfate and dichlorophenolindophenol as electron acceptors. This is Acrylate reductase flavoprotein subunit from Shewanella woodyi (strain ATCC 51908 / MS32).